We begin with the raw amino-acid sequence, 141 residues long: Cell division protein SepF (141 aa).

The protein belongs to the SepF family. In terms of assembly, homodimer. Interacts with FtsZ.

Its subcellular location is the cytoplasm. Functionally, cell division protein that is part of the divisome complex and is recruited early to the Z-ring. Probably stimulates Z-ring formation, perhaps through the cross-linking of FtsZ protofilaments. Its function overlaps with FtsA. This Anoxybacillus flavithermus (strain DSM 21510 / WK1) protein is Cell division protein SepF.